A 240-amino-acid chain; its full sequence is Ubiquinone biosynthesis O-methyltransferase (240 aa).

Residues Arg44, Gly64, Asp85, and Met129 each coordinate S-adenosyl-L-methionine.

It belongs to the methyltransferase superfamily. UbiG/COQ3 family.

It carries out the reaction a 3-demethylubiquinol + S-adenosyl-L-methionine = a ubiquinol + S-adenosyl-L-homocysteine + H(+). The enzyme catalyses a 3-(all-trans-polyprenyl)benzene-1,2-diol + S-adenosyl-L-methionine = a 2-methoxy-6-(all-trans-polyprenyl)phenol + S-adenosyl-L-homocysteine + H(+). Its pathway is cofactor biosynthesis; ubiquinone biosynthesis. In terms of biological role, O-methyltransferase that catalyzes the 2 O-methylation steps in the ubiquinone biosynthetic pathway. The polypeptide is Ubiquinone biosynthesis O-methyltransferase (Escherichia coli O8 (strain IAI1)).